Here is a 71-residue protein sequence, read N- to C-terminus: uncharacterized protein (71 aa).

At 1–16 (MLLLYTVMILTCIIYK) the chain is on the cytoplasmic side. A helical transmembrane segment spans residues 17–38 (LVPDNKYWPIHMFFFIMIYIVY). Residues 39–69 (MYEKLDIHEKSQFWNYTMARLSGHPVPTIIC) lie on the Extracellular side of the membrane. Asparagine 53 carries N-linked (GlcNAc...) asparagine; by host glycosylation.

It belongs to the asfivirus X69R family.

It is found in the host membrane. This is an uncharacterized protein from African swine fever virus (isolate Pig/Kenya/KEN-50/1950) (ASFV).